Reading from the N-terminus, the 487-residue chain is UDP-N-acetylmuramoyl-L-alanyl-D-glutamate--2,6-diaminopimelate ligase (487 aa).

Residue Ser30 coordinates UDP-N-acetyl-alpha-D-muramoyl-L-alanyl-D-glutamate. Position 109 to 115 (109 to 115 (GTNGKTS)) interacts with ATP. Residues 151–152 (TT), Ser178, and Arg186 contribute to the UDP-N-acetyl-alpha-D-muramoyl-L-alanyl-D-glutamate site. Lys218 is modified (N6-carboxylysine). Meso-2,6-diaminopimelate-binding positions include Arg379, 403-406 (DNPR), Gly455, and Glu459. A Meso-diaminopimelate recognition motif motif is present at residues 403-406 (DNPR).

It belongs to the MurCDEF family. MurE subfamily. The cofactor is Mg(2+). In terms of processing, carboxylation is probably crucial for Mg(2+) binding and, consequently, for the gamma-phosphate positioning of ATP.

Its subcellular location is the cytoplasm. The catalysed reaction is UDP-N-acetyl-alpha-D-muramoyl-L-alanyl-D-glutamate + meso-2,6-diaminopimelate + ATP = UDP-N-acetyl-alpha-D-muramoyl-L-alanyl-gamma-D-glutamyl-meso-2,6-diaminopimelate + ADP + phosphate + H(+). It functions in the pathway cell wall biogenesis; peptidoglycan biosynthesis. Catalyzes the addition of meso-diaminopimelic acid to the nucleotide precursor UDP-N-acetylmuramoyl-L-alanyl-D-glutamate (UMAG) in the biosynthesis of bacterial cell-wall peptidoglycan. The sequence is that of UDP-N-acetylmuramoyl-L-alanyl-D-glutamate--2,6-diaminopimelate ligase from Alkaliphilus oremlandii (strain OhILAs) (Clostridium oremlandii (strain OhILAs)).